Reading from the N-terminus, the 343-residue chain is S-adenosylmethionine:tRNA ribosyltransferase-isomerase (343 aa).

It belongs to the QueA family. As to quaternary structure, monomer.

It is found in the cytoplasm. The enzyme catalyses 7-aminomethyl-7-carbaguanosine(34) in tRNA + S-adenosyl-L-methionine = epoxyqueuosine(34) in tRNA + adenine + L-methionine + 2 H(+). It functions in the pathway tRNA modification; tRNA-queuosine biosynthesis. In terms of biological role, transfers and isomerizes the ribose moiety from AdoMet to the 7-aminomethyl group of 7-deazaguanine (preQ1-tRNA) to give epoxyqueuosine (oQ-tRNA). The sequence is that of S-adenosylmethionine:tRNA ribosyltransferase-isomerase from Coxiella burnetii (strain RSA 331 / Henzerling II).